The sequence spans 534 residues: Cytochrome c oxidase subunit 1 (534 aa).

The chain crosses the membrane as a helical span at residues 16–36 (VLYFIFSVFCGMAGTGMSMII). Glu39 and Gly44 together coordinate Ca(2+). A Fe(II)-heme a-binding site is contributed by His62. 6 helical membrane-spanning segments follow: residues 64–84 (ILMV…NYLL), 101–121 (ISFW…LVES), 147–167 (AIFA…NFIV), 183–203 (PLFV…LPVL), 235–255 (LFWF…FGVI), and 267–287 (VFGE…GFLV). His241 provides a ligand contact to Cu cation. Residues 241–245 (HPEVY) constitute a cross-link (1'-histidyl-3'-tyrosine (His-Tyr)). Tyr245 provides a ligand contact to O2. Positions 290 and 291 each coordinate Cu cation. The next 2 membrane-spanning stretches (helical) occupy residues 310-330 (MIIA…IYGG) and 338-358 (MMYA…GVAL). His368 and Asp369 together coordinate Mg(2+). A run of 2 helical transmembrane segments spans residues 372 to 392 (YVVA…MFAG) and 414 to 434 (FWLI…LGIN). A heme a3-binding site is contributed by His376. His378 is a Fe(II)-heme a binding site. Pro441 contacts Ca(2+). The helical transmembrane segment at 453-473 (VSSIGSFIAMISLILFIYILF) threads the bilayer.

It belongs to the heme-copper respiratory oxidase family. In terms of assembly, component of the cytochrome c oxidase (complex IV, CIV), a multisubunit enzyme composed of a catalytic core of 3 subunits and several supernumerary subunits. The complex exists as a monomer or a dimer and forms supercomplexes (SCs) in the inner mitochondrial membrane with ubiquinol-cytochrome c oxidoreductase (cytochrome b-c1 complex, complex III, CIII). Heme serves as cofactor. Cu cation is required as a cofactor.

The protein localises to the mitochondrion inner membrane. It catalyses the reaction 4 Fe(II)-[cytochrome c] + O2 + 8 H(+)(in) = 4 Fe(III)-[cytochrome c] + 2 H2O + 4 H(+)(out). It functions in the pathway energy metabolism; oxidative phosphorylation. Component of the cytochrome c oxidase, the last enzyme in the mitochondrial electron transport chain which drives oxidative phosphorylation. The respiratory chain contains 3 multisubunit complexes succinate dehydrogenase (complex II, CII), ubiquinol-cytochrome c oxidoreductase (cytochrome b-c1 complex, complex III, CIII) and cytochrome c oxidase (complex IV, CIV), that cooperate to transfer electrons derived from NADH and succinate to molecular oxygen, creating an electrochemical gradient over the inner membrane that drives transmembrane transport and the ATP synthase. Cytochrome c oxidase is the component of the respiratory chain that catalyzes the reduction of oxygen to water. Electrons originating from reduced cytochrome c in the intermembrane space (IMS) are transferred via the dinuclear copper A center (CU(A)) of subunit 2 and heme A of subunit 1 to the active site in subunit 1, a binuclear center (BNC) formed by heme A3 and copper B (CU(B)). The BNC reduces molecular oxygen to 2 water molecules using 4 electrons from cytochrome c in the IMS and 4 protons from the mitochondrial matrix. The chain is Cytochrome c oxidase subunit 1 (COX1) from Vanderwaltozyma polyspora (strain ATCC 22028 / DSM 70294 / BCRC 21397 / CBS 2163 / NBRC 10782 / NRRL Y-8283 / UCD 57-17) (Kluyveromyces polysporus).